The chain runs to 251 residues: Octanoyltransferase (251 aa).

One can recognise a BPL/LPL catalytic domain in the interval 56–241 (ADTGDEIWVV…NLDGASAAAD (186 aa)). Substrate is bound by residues 96–103 (RGGQITYH), 168–170 (ALG), and 181–183 (GLS). Cysteine 199 serves as the catalytic Acyl-thioester intermediate.

Belongs to the LipB family.

The protein localises to the cytoplasm. It carries out the reaction octanoyl-[ACP] + L-lysyl-[protein] = N(6)-octanoyl-L-lysyl-[protein] + holo-[ACP] + H(+). It functions in the pathway protein modification; protein lipoylation via endogenous pathway; protein N(6)-(lipoyl)lysine from octanoyl-[acyl-carrier-protein]: step 1/2. Its function is as follows. Catalyzes the transfer of endogenously produced octanoic acid from octanoyl-acyl-carrier-protein onto the lipoyl domains of lipoate-dependent enzymes. Lipoyl-ACP can also act as a substrate although octanoyl-ACP is likely to be the physiological substrate. The polypeptide is Octanoyltransferase (Burkholderia cenocepacia (strain HI2424)).